The following is a 635-amino-acid chain: Chaperone protein HtpG (635 aa).

An a; substrate-binding region spans residues 1 to 336; sequence MTTAEAAAPE…SADLPLNLSR (336 aa). Residues 337 to 556 form a b region; the sequence is EMLQDSAILA…ESGIDRRLEK (220 aa). Residues 557 to 635 are c; sequence LLASAGRLGD…RVMQRGLPTA (79 aa).

Belongs to the heat shock protein 90 family. In terms of assembly, homodimer.

Its subcellular location is the cytoplasm. Functionally, molecular chaperone. Has ATPase activity. The chain is Chaperone protein HtpG from Azorhizobium caulinodans (strain ATCC 43989 / DSM 5975 / JCM 20966 / LMG 6465 / NBRC 14845 / NCIMB 13405 / ORS 571).